Reading from the N-terminus, the 477-residue chain is Tripartite motif-containing protein 72 (477 aa).

Zn(2+)-binding residues include Cys-14, Cys-17, Cys-29, His-31, Cys-34, Cys-37, Cys-53, Cys-56, Cys-86, His-89, Cys-97, Asp-100, Cys-105, Cys-108, His-114, and His-117. The segment at 14–57 (CPLCLQLFDAPVTAECGHSFCRACLIRVAGEPADDGTVACPCCQ) adopts an RING-type zinc-finger fold. The B box-type zinc-finger motif lies at 81-122 (VPQGHCEEHLDPLSIYCEQDRTLVCGVCASLGSHRGHRLLPA). Residues 135–232 (QQKAQLQEAC…EKVLEEVADK (98 aa)) adopt a coiled-coil conformation. Cys-144 carries the post-translational modification S-nitrosocysteine. Position 255 is a phosphoserine (Ser-255). The B30.2/SPRY domain maps to 271-475 (DFKFQVWKKM…PLLLVGPDSE (205 aa)).

It belongs to the TRIM/RBCC family. As to quaternary structure, homodimer. Homooligomer; disulfide-linked. Oligomerizes on the phospholipid membrane. Interacts with DYSF and CAV3. Disulfide bond formation at Cys-242 occurs in case of membrane damage that cause the entry of the oxidized milieu of the extracellular space, resulting in homooligomerization. Post-translationally, S-nitrosylation at Cys-144 stabilizes TRIM72 and protects against oxidation-induced protein degradation and cell death.

The protein localises to the cell membrane. It localises to the sarcolemma. It is found in the cytoplasmic vesicle membrane. It carries out the reaction S-ubiquitinyl-[E2 ubiquitin-conjugating enzyme]-L-cysteine + [acceptor protein]-L-lysine = [E2 ubiquitin-conjugating enzyme]-L-cysteine + N(6)-ubiquitinyl-[acceptor protein]-L-lysine.. It functions in the pathway protein modification; protein ubiquitination. With respect to regulation, specifically binds phosphatidylserine. The binding to phospholipids enhances ubiquitination activity. In terms of biological role, muscle-specific E3 ubiquitin-protein ligase that plays a central role in cell membrane repair by nucleating the assembly of the repair machinery at injury sites. Its ubiquitination activity is mediated by E2 ubiquitin-conjugating enzymes UBE2D1, UBE2D2 and UBE2D3. Acts as a sensor of oxidation: upon membrane damage, entry of extracellular oxidative environment results in disulfide bond formation and homooligomerization at the injury site. This oligomerization acts as a nucleation site for recruitment of TRIM72-containing vesicles to the injury site, leading to membrane patch formation. Probably acts upstream of the Ca(2+)-dependent membrane resealing process. Required for transport of DYSF to sites of cell injury during repair patch formation. Regulates membrane budding and exocytosis. May be involved in the regulation of the mobility of KCNB1-containing endocytic vesicles. The sequence is that of Tripartite motif-containing protein 72 from Rattus norvegicus (Rat).